Here is a 288-residue protein sequence, read N- to C-terminus: Prohibitin-1, mitochondrial (288 aa).

The Mitochondrial matrix portion of the chain corresponds to 1–10 (MNNVKVPKIP). The chain crosses the membrane as a helical; Signal-anchor for type II membrane protein span at residues 11–30 (GGGAISTLLKVGIIGGLGLY). Over 31–288 (GATHSLYNVE…GMNLDVDAKN (258 aa)) the chain is Mitochondrial intermembrane. Residues 186-219 (KEFTAAIEAKQVAAQEAERAKFIVEKAEQDKRSA) are a coiled coil.

This sequence belongs to the prohibitin family. In terms of assembly, component of a prohibitin multimeric complex in mitochondrial membranes. As to expression, mostly expressed in proliferative tissues, including vasculature, shoot and root apical tissues.

The protein resides in the mitochondrion inner membrane. Functionally, prohibitin probably acts as a holdase/unfoldase for the stabilization of newly synthesized mitochondrial proteins. This chain is Prohibitin-1, mitochondrial (PHB1), found in Arabidopsis thaliana (Mouse-ear cress).